Here is a 360-residue protein sequence, read N- to C-terminus: Histidinol-phosphate aminotransferase (360 aa).

At Lys218 the chain carries N6-(pyridoxal phosphate)lysine.

The protein belongs to the class-II pyridoxal-phosphate-dependent aminotransferase family. Histidinol-phosphate aminotransferase subfamily. Homodimer. It depends on pyridoxal 5'-phosphate as a cofactor.

It catalyses the reaction L-histidinol phosphate + 2-oxoglutarate = 3-(imidazol-4-yl)-2-oxopropyl phosphate + L-glutamate. The protein operates within amino-acid biosynthesis; L-histidine biosynthesis; L-histidine from 5-phospho-alpha-D-ribose 1-diphosphate: step 7/9. The protein is Histidinol-phosphate aminotransferase of Pelagibacter ubique (strain HTCC1062).